We begin with the raw amino-acid sequence, 430 residues long: Adenylosuccinate synthetase (430 aa).

GTP is bound by residues 12–18 (GDEGKGK) and 40–42 (GHT). Asp-13 functions as the Proton acceptor in the catalytic mechanism. Residues Asp-13 and Gly-40 each contribute to the Mg(2+) site. Residues 13-16 (DEGK), 38-41 (NAGH), Thr-130, Arg-144, Gln-224, Thr-239, and Arg-303 each bind IMP. His-41 functions as the Proton donor in the catalytic mechanism. 299-305 (TVTSRKR) is a binding site for substrate. GTP is bound by residues Arg-305, 331–333 (KLD), and 413–415 (STS).

This sequence belongs to the adenylosuccinate synthetase family. In terms of assembly, homodimer. Requires Mg(2+) as cofactor.

The protein localises to the cytoplasm. It carries out the reaction IMP + L-aspartate + GTP = N(6)-(1,2-dicarboxyethyl)-AMP + GDP + phosphate + 2 H(+). It participates in purine metabolism; AMP biosynthesis via de novo pathway; AMP from IMP: step 1/2. In terms of biological role, plays an important role in the de novo pathway of purine nucleotide biosynthesis. Catalyzes the first committed step in the biosynthesis of AMP from IMP. The protein is Adenylosuccinate synthetase of Pelagibacter ubique (strain HTCC1062).